The chain runs to 351 residues: Nicotinate-nucleotide--dimethylbenzimidazole phosphoribosyltransferase (351 aa).

Glu317 functions as the Proton acceptor in the catalytic mechanism.

Belongs to the CobT family.

It catalyses the reaction 5,6-dimethylbenzimidazole + nicotinate beta-D-ribonucleotide = alpha-ribazole 5'-phosphate + nicotinate + H(+). Its pathway is nucleoside biosynthesis; alpha-ribazole biosynthesis; alpha-ribazole from 5,6-dimethylbenzimidazole: step 1/2. Its function is as follows. Catalyzes the synthesis of alpha-ribazole-5'-phosphate from nicotinate mononucleotide (NAMN) and 5,6-dimethylbenzimidazole (DMB). This is Nicotinate-nucleotide--dimethylbenzimidazole phosphoribosyltransferase from Bradyrhizobium sp. (strain ORS 278).